The sequence spans 257 residues: GTP cyclohydrolase FolE2 (257 aa).

Belongs to the GTP cyclohydrolase IV family.

The catalysed reaction is GTP + H2O = 7,8-dihydroneopterin 3'-triphosphate + formate + H(+). It participates in cofactor biosynthesis; 7,8-dihydroneopterin triphosphate biosynthesis; 7,8-dihydroneopterin triphosphate from GTP: step 1/1. Functionally, converts GTP to 7,8-dihydroneopterin triphosphate. The polypeptide is GTP cyclohydrolase FolE2 (Pelobacter propionicus (strain DSM 2379 / NBRC 103807 / OttBd1)).